A 223-amino-acid polypeptide reads, in one-letter code: uncharacterized protein (223 aa).

This sequence to M.jannaschii MJ1453.

This is an uncharacterized protein from Methanothermobacter thermautotrophicus (strain ATCC 29096 / DSM 1053 / JCM 10044 / NBRC 100330 / Delta H) (Methanobacterium thermoautotrophicum).